Consider the following 278-residue polypeptide: Insulin-like growth factor-binding protein-like 1 (278 aa).

The N-terminal stretch at 1–25 (MPRLSLLLPLLLLLLLPLLPPLSPS) is a signal peptide. Residues 34 to 109 (RRPKCGPCRP…PEGTGLCVCA (76 aa)) form the IGFBP N-terminal domain. 7 disulfide bridges follow: cysteine 38–cysteine 63, cysteine 41–cysteine 65, cysteine 46–cysteine 66, cysteine 52–cysteine 69, cysteine 77–cysteine 91, cysteine 85–cysteine 106, and cysteine 115–cysteine 151. The region spanning 95 to 153 (AAGAAPEGTGLCVCAQRGTVCGSDGRSYPSVCALRLRARHTPRAHPGHLHKARDGPCEF) is the Kazal-like domain. The 105-residue stretch at 155–259 (PVVVVPPRSV…GEAESHSTVT (105 aa)) folds into the Ig-like C2-type domain. N-linked (GlcNAc...) asparagine glycosylation occurs at asparagine 166. A disulfide bridge links cysteine 176 with cysteine 243.

In terms of tissue distribution, expressed at the highest level in both brain and testis, with lower levels in the prostate, bladder and lung.

The protein resides in the secreted. IGF-binding proteins prolong the half-life of IGFs and have been shown to either inhibit or stimulate the growth promoting effects of the IGFs in cell culture. They alter the interaction of IGFs with their cell surface receptors. May be a putative tumor suppressor protein. In Homo sapiens (Human), this protein is Insulin-like growth factor-binding protein-like 1 (IGFBPL1).